A 576-amino-acid chain; its full sequence is Threonine dehydratase, mitochondrial (576 aa).

Lysine 109 is subject to N6-(pyridoxal phosphate)lysine. 2 consecutive ACT-like domains span residues 393-473 and 495-566; these read VFML…DISD and RIIS…DETD.

This sequence belongs to the serine/threonine dehydratase family. As to quaternary structure, homotetramer. Pyridoxal 5'-phosphate is required as a cofactor.

It localises to the mitochondrion. It catalyses the reaction L-threonine = 2-oxobutanoate + NH4(+). It functions in the pathway amino-acid biosynthesis; L-isoleucine biosynthesis; 2-oxobutanoate from L-threonine: step 1/1. Its activity is regulated as follows. Isoleucine allosterically inhibits while valine allosterically activates this enzyme. This is Threonine dehydratase, mitochondrial (ILV1) from Saccharomyces cerevisiae (strain ATCC 204508 / S288c) (Baker's yeast).